A 309-amino-acid chain; its full sequence is Interferon-inducible double-stranded RNA-dependent protein kinase activator A homolog A (309 aa).

Residues 1–22 (MSQERFPAAPKMSSEKPTSLDA) are disordered. DRBM domains follow at residues 31–98 (TPIQ…ILRG), 123–191 (NPVG…KFKT), and 236–304 (DYVK…YLKI).

Belongs to the PRKRA family. Homodimer. Interacts with dicer1 and eif2ak2/pkr. Also able to interact with dsRNA.

Its subcellular location is the cytoplasm. The protein resides in the perinuclear region. It is found in the nucleus. In terms of biological role, activates eif2ak2/pkr in the absence of double-stranded RNA (dsRNA), leading to phosphorylation of eif2s1/efi2-alpha and inhibition of translation and induction of apoptosis. Required for siRNA production by dicer1 and for subsequent siRNA-mediated post-transcriptional gene silencing. Does not seem to be required for processing of pre-miRNA to miRNA by dicer1. This is Interferon-inducible double-stranded RNA-dependent protein kinase activator A homolog A (prkra-a) from Xenopus laevis (African clawed frog).